The chain runs to 182 residues: Large ribosomal subunit protein uL5 (182 aa).

Belongs to the universal ribosomal protein uL5 family. As to quaternary structure, part of the 50S ribosomal subunit; part of the 5S rRNA/L5/L18/L25 subcomplex. Contacts the 5S rRNA and the P site tRNA. Forms a bridge to the 30S subunit in the 70S ribosome.

Its function is as follows. This is one of the proteins that bind and probably mediate the attachment of the 5S RNA into the large ribosomal subunit, where it forms part of the central protuberance. In the 70S ribosome it contacts protein S13 of the 30S subunit (bridge B1b), connecting the 2 subunits; this bridge is implicated in subunit movement. Contacts the P site tRNA; the 5S rRNA and some of its associated proteins might help stabilize positioning of ribosome-bound tRNAs. The polypeptide is Large ribosomal subunit protein uL5 (Borreliella burgdorferi (strain ATCC 35210 / DSM 4680 / CIP 102532 / B31) (Borrelia burgdorferi)).